The primary structure comprises 1213 residues: MEGGNAGCSRQLPERAGPAESEPDVFTTFAVRTLLGLTTKLESVTPKEEEAVLKAFQPLHIDVNTQANNRYERNDNDGVDDSENQHCESCTSDQADPMSGSRAEPELEPEPAGQNEILLPHLRSVQTSLSESDNDAILVQGTLVHTTSDTESDGESKDPDADETGTSKCGLNNAALSAVALDGNNQSKEESDSEGYGHSDDTVGRDDTELHPPISQWLPRKLDSILEHDSSGKDRTLMDEQFSCLLATGECSPELSGEDQRPSADNVSFHKAALTERSFQLPAFFSGLRVRKKGLNTEDGETITEIKPRENDLALLKLRQPVKKSNITSGLTTKKKSSEPKASPTFLEQLSHLLNIDVSKNDERTQDSGAGFGETEDSDEGPENKASGQTEPLFPSEEIKSSPAESALDVFKALFTRPPKKETTADPSELEAIKRKMRNEKESLKAVFERSKSKPGDGPSDKSPDLSPSEQDDKTPGRLQTVWPPPKANHEEVKVGLKYTEAEYQAAILHLKREHKEEIETLKSQFELRVFHIRGEHAVSTAQLEETIAHLKNELDNKLNRRNEEARDIGVSTEDDNLPKTYRNVCIQTDRETFIKPSEEENRAVKNNQIVPKKLNISSLTHSISTQGENKDSYDVPSSESVLSCQPKQMLPPSPPPPPPPPPPPPPPPPPFSDSSLPGLVPPPPPLPTGPTSVTPHFAFGPPLPPQLSEGCRDFQAPAPPAPPPLPGLGPPVPPPLPGSGLPPPPPPPGPGLFFNSTLSSSQGPRKPAIEPSRPMKPLYWTRIQLQGSRKTAIPTLWESLEEPDILDTTEFEYLFSKDTTQEKRKPLSETYEKKTKAKKIIKLLDGKRSQTVGILISSLHLEMKDIQQAILCVDDSVVDLETLEALYENRAQKDELEKIEQYYQTSKEEELKLLDKPEQFLYELSQIPNFTERAQCIIFQSVFSEGITSVHRKVDIITRVSKALLNMTSVKEILGLILAFGNYMNGGNRTRGQADGFGLEILPKLKDVKSRDNRINLVDYVVIYYLRHCDKEAGTDKSIFPLPEPQDFFQASQVKFEDLIKDLRKLKRDLEASEKQMKLVCRESSEEHLQPFKEKLEEFFQKAKEERKKEESSLENAQKCFEETVGYFGIKPKPGEKEITPNYVFTVWYEFCSDFKTIWKRESKSISKERIKVAQQSVSKLTAEKKVETKKINPTASLKERLRQKEANVNAN.

Disordered regions lie at residues Met1–Asp24, Gln66–Pro111, Val144–Cys169, Gly183–Gln216, and Asp357–Asn489. 2 stretches are compositionally biased toward basic and acidic residues: residues Ser187–Leu210 and Glu431–Pro464. 2 coiled-coil regions span residues Ser428 to Arg450 and Glu503 to Ser572. The tract at residues Ile624–Arg774 is disordered. Positions Val636–Pro647 are enriched in polar residues. 3 stretches are compositionally biased toward pro residues: residues Met650 to Phe672, Leu680 to Thr689, and Pro718 to Pro751. In terms of domain architecture, FH1 spans Pro652–Pro751. Positions Phe755–Gly764 are enriched in polar residues. The FH2 domain occupies Arg766–Leu1182. The stretch at Phe1050–Thr1125 forms a coiled coil. The segment at Ile1193–Asn1213 is disordered.

This sequence belongs to the formin homology family. Cappuccino subfamily. As to expression, present in the adult brain, kidney, brain, heart and intestine and throughout the embryo.

Its subcellular location is the nucleus. Its function is as follows. Is important for morphogenesis of limb and kidney and may be involved in determining dorsoventral neural tube polarity and motor neuron induction. It may also have a function in differentiated cells or be involved in maintaining specific differentiated states. This is Formin (LD) from Gallus gallus (Chicken).